Reading from the N-terminus, the 271-residue chain is Sec-independent protein translocase protein TatC (271 aa).

A run of 5 helical transmembrane segments spans residues 24–44 (ISVGAIIVGFILCYSFSEQIF), 78–98 (FFAGLFLAMPVLFTQMWLFIA), 112–132 (FLFVTPVLFFMGGTLAYYFVF), 159–179 (LVIKLIIAFGITFELPVGLLL), and 215–235 (FTQVMLAIPIMLMYEISIFFG). The segment at 247–271 (AAEEAQWAADHNVDDDDVDHPEHKA) is disordered.

It belongs to the TatC family. In terms of assembly, the Tat system comprises two distinct complexes: a TatABC complex, containing multiple copies of TatA, TatB and TatC subunits, and a separate TatA complex, containing only TatA subunits. Substrates initially bind to the TatABC complex, which probably triggers association of the separate TatA complex to form the active translocon.

It is found in the cell inner membrane. In terms of biological role, part of the twin-arginine translocation (Tat) system that transports large folded proteins containing a characteristic twin-arginine motif in their signal peptide across membranes. Together with TatB, TatC is part of a receptor directly interacting with Tat signal peptides. The polypeptide is Sec-independent protein translocase protein TatC (Magnetococcus marinus (strain ATCC BAA-1437 / JCM 17883 / MC-1)).